The chain runs to 522 residues: Protein RCC2 (522 aa).

The segment at 1–83 (MPRKKAAAAA…TAGKAGGAAV (83 aa)) is disordered. Ser16 carries the post-translational modification Phosphoserine. Residue Thr20 is modified to Phosphothreonine. A compositionally biased stretch (basic residues) spans 24-36 (GPRKRGGPAGRKR). Residues Ser43, Ser44, Ser45, Ser46, Ser50, and Ser51 each carry the phosphoserine modification. The span at 71 to 82 (RPATAGKAGGAA) shows a compositional bias: low complexity. Residues Lys92 and Lys124 each carry the N6-acetyllysine modification. RCC1 repeat units follow at residues 103 to 165 (KGQL…SLLI), 168 to 219 (EGKL…ALTE), 221 to 271 (GSVF…IMDC), 273 to 347 (GNLY…VLDS), 348 to 401 (QKRV…AVSE), 403 to 447 (GGLF…VAAD), and 448 to 501 (ESTI…VIAR). Residue Lys293 is modified to N6-acetyllysine. A required for interaction with RAC1 region spans residues 318–325 (KTKDGQIL). A Phosphothreonine modification is found at Thr342. At Lys377 the chain carries N6-acetyllysine. A compositionally biased stretch (basic and acidic residues) spans 502 to 515 (DESETEKEKIKKLP). Residues 502–522 (DESETEKEKIKKLPEYNPRTL) form a disordered region.

Interacts with RAC1. Interacts with nucleotide-free and with GDP and GTP-bound forms of RAC1, with a slight preference for GDP-bound RAC1. Binds preferentially to the nucleotide-free form of RAC1. Interacts with CORO1C. Interacts with microtubules.

The protein resides in the nucleus. It localises to the nucleolus. The protein localises to the cytoplasm. It is found in the cytoskeleton. Its subcellular location is the chromosome. The protein resides in the centromere. It localises to the spindle. The protein localises to the midbody. It is found in the cell membrane. Multifunctional protein that may affect its functions by regulating the activity of small GTPases, such as RAC1 and RALA. Required for normal progress through the cell cycle, both during interphase and during mitosis. Required for the presence of normal levels of MAD2L1, AURKB and BIRC5 on inner centromeres during mitosis, and for normal attachment of kinetochores to mitotic spindles. Required for normal organization of the microtubule cytoskeleton in interphase cells. Functions as guanine nucleotide exchange factor (GEF) for RALA. Interferes with the activation of RAC1 by guanine nucleotide exchange factors. Prevents accumulation of active, GTP-bound RAC1, and suppresses RAC1-mediated reorganization of the actin cytoskeleton and formation of membrane protrusions. Required for normal cellular responses to contacts with the extracellular matrix of adjacent cells, and for directional cell migration in response to a fibronectin gradient (in vitro). The sequence is that of Protein RCC2 (RCC2) from Homo sapiens (Human).